The sequence spans 429 residues: Adenylosuccinate synthetase (429 aa).

GTP contacts are provided by residues 13 to 19 (GDEGKGK) and 41 to 43 (GHT). D14 serves as the catalytic Proton acceptor. Positions 14 and 41 each coordinate Mg(2+). IMP contacts are provided by residues 14-17 (DEGK), 39-42 (NAGH), T130, R144, Q224, T239, and R303. H42 (proton donor) is an active-site residue. Substrate is bound at residue 299–305 (ATTGRAR). GTP contacts are provided by residues R305, 331-333 (KLD), and 412-414 (STG).

It belongs to the adenylosuccinate synthetase family. Homodimer. The cofactor is Mg(2+).

Its subcellular location is the cytoplasm. It catalyses the reaction IMP + L-aspartate + GTP = N(6)-(1,2-dicarboxyethyl)-AMP + GDP + phosphate + 2 H(+). It participates in purine metabolism; AMP biosynthesis via de novo pathway; AMP from IMP: step 1/2. Functionally, plays an important role in the de novo pathway of purine nucleotide biosynthesis. Catalyzes the first committed step in the biosynthesis of AMP from IMP. This chain is Adenylosuccinate synthetase, found in Psychrobacter arcticus (strain DSM 17307 / VKM B-2377 / 273-4).